The sequence spans 176 residues: ATP synthase subunit b, chloroplastic (176 aa).

Residues leucine 19–leucine 39 traverse the membrane as a helical segment.

The protein belongs to the ATPase B chain family. In terms of assembly, F-type ATPases have 2 components, F(1) - the catalytic core - and F(0) - the membrane proton channel. F(1) has five subunits: alpha(3), beta(3), gamma(1), delta(1), epsilon(1). F(0) has four main subunits: a(1), b(1), b'(1) and c(10-14). The alpha and beta chains form an alternating ring which encloses part of the gamma chain. F(1) is attached to F(0) by a central stalk formed by the gamma and epsilon chains, while a peripheral stalk is formed by the delta, b and b' chains.

The protein resides in the plastid. Its subcellular location is the chloroplast thylakoid membrane. Functionally, f(1)F(0) ATP synthase produces ATP from ADP in the presence of a proton or sodium gradient. F-type ATPases consist of two structural domains, F(1) containing the extramembraneous catalytic core and F(0) containing the membrane proton channel, linked together by a central stalk and a peripheral stalk. During catalysis, ATP synthesis in the catalytic domain of F(1) is coupled via a rotary mechanism of the central stalk subunits to proton translocation. In terms of biological role, component of the F(0) channel, it forms part of the peripheral stalk, linking F(1) to F(0). The chain is ATP synthase subunit b, chloroplastic from Galdieria sulphuraria (Red alga).